We begin with the raw amino-acid sequence, 550 residues long: Calcyphosin-2 (550 aa).

2 disordered regions span residues 1–20 (MVPP…DNFS) and 175–198 (ISDP…DSER). Positions 181-190 (DLNTKNQESS) are enriched in polar residues. 3 consecutive EF-hand domains span residues 379–414 (RILT…FHLE), 415–452 (VSEQ…EMNE), and 453–488 (YRKS…KKHP). Ca(2+)-binding residues include Asp-466, Asn-468, Thr-470, and Asp-477.

The sequence is that of Calcyphosin-2 (Caps2) from Mus musculus (Mouse).